We begin with the raw amino-acid sequence, 1378 residues long: DNA-directed RNA polymerase subunit beta (1378 aa).

This sequence belongs to the RNA polymerase beta chain family. As to quaternary structure, the RNAP catalytic core consists of 2 alpha, 1 beta, 1 beta' and 1 omega subunit. When a sigma factor is associated with the core the holoenzyme is formed, which can initiate transcription.

The catalysed reaction is RNA(n) + a ribonucleoside 5'-triphosphate = RNA(n+1) + diphosphate. Its function is as follows. DNA-dependent RNA polymerase catalyzes the transcription of DNA into RNA using the four ribonucleoside triphosphates as substrates. In Dinoroseobacter shibae (strain DSM 16493 / NCIMB 14021 / DFL 12), this protein is DNA-directed RNA polymerase subunit beta.